Consider the following 155-residue polypeptide: MLKQVEIFTDGSCLGNPGPGGYGAILRYRGHEKTFSEGYTLTTNNRMELMAAIVALEALKEHCEVTLSTDSQYVRQGITQWIHNWKKRGWKTAEKKPVKNVDLWKRLDAALGQHQIKWVWVKGHAGHPENERCDELARAAAMHPTQEDSGYQAEA.

The 142-residue stretch at 1–142 folds into the RNase H type-1 domain; that stretch reads MLKQVEIFTD…CDELARAAAM (142 aa). Residues aspartate 10, glutamate 48, aspartate 70, and aspartate 134 each contribute to the Mg(2+) site.

This sequence belongs to the RNase H family. Monomer. Requires Mg(2+) as cofactor.

The protein localises to the cytoplasm. It carries out the reaction Endonucleolytic cleavage to 5'-phosphomonoester.. In terms of biological role, endonuclease that specifically degrades the RNA of RNA-DNA hybrids. This Salmonella paratyphi C (strain RKS4594) protein is Ribonuclease H.